Here is a 73-residue protein sequence, read N- to C-terminus: Pelophylaxin-1 (73 aa).

The first 22 residues, 1-22 (MFTMKKSLLLVFFLGTIALSLC), serve as a signal peptide directing secretion. Positions 23–41 (EEERGADDDNGGEITDEEI) are excised as a propeptide. Cys67 and Cys73 are disulfide-bonded.

Expressed by the skin glands.

It is found in the secreted. Antimicrobial peptide. This is Pelophylaxin-1 from Pelophylax fukienensis (Fukien gold-striped pond frog).